The chain runs to 228 residues: Latherin (228 aa).

Residues 1 to 20 form the signal peptide; it reads MLKVSCLFVLLCGLLVPSSA. Residues Cys153 and Cys196 are joined by a disulfide bond.

Belongs to the BPI/LBP/Plunc superfamily. Plunc family. In terms of assembly, monomer. In terms of processing, no sign of N-X-[ST] acceptor site even though reported as N-glycosylated. As to expression, found in sweat (at protein level).

It is found in the secreted. Functionally, major protein in sweat, has surfactant properties. Has a role in temperature regulation by having a capacity to make hydrophobic surfaces wettable and so can function in promoting spreading and evaporation of sweat. In Equus caballus (Horse), this protein is Latherin (LATH).